The sequence spans 274 residues: Protein LNK4 (274 aa).

The segment at 209-249 is disordered; the sequence is NSQQKSDSNSDEFLEDRTRETEFETKLNRQSRGQSHIQQDG. The segment covering 223–235 has biased composition (basic and acidic residues); it reads EDRTRETEFETKL. A compositionally biased stretch (polar residues) spans 236–249; that stretch reads NRQSRGQSHIQQDG.

As to quaternary structure, interacts with REV8.

Probable transcriptional coactivator. The polypeptide is Protein LNK4 (Arabidopsis thaliana (Mouse-ear cress)).